The following is a 1127-amino-acid chain: Zinc finger protein basonuclin-2 (1127 aa).

The disordered stretch occupies residues 44–67 (SEEAEVDVRERDTQRDREPKRARD). A compositionally biased stretch (basic and acidic residues) spans 49–67 (VDVRERDTQRDREPKRARD). Lysine 305 is covalently cross-linked (Glycyl lysine isopeptide (Lys-Gly) (interchain with G-Cter in SUMO2)). The disordered stretch occupies residues 386-450 (STQNEYNESS…DLSKTEHPKS (65 aa)). Over residues 389–400 (NEYNESSESEVS) the composition is skewed to low complexity. Residues 403-422 (PYKSDQTPNRNALTSITNVE) show a composition bias toward polar residues. Residues lysine 424, lysine 444, and lysine 449 each participate in a glycyl lysine isopeptide (Lys-Gly) (interchain with G-Cter in SUMO2) cross-link. Residues 469 to 492 (VFCNACGKTFYDKGTLKIHYNAVH) form a C2H2-type 1 zinc finger. Position 589 is a phosphoserine (serine 589). A Glycyl lysine isopeptide (Lys-Gly) (interchain with G-Cter in SUMO2) cross-link involves residue lysine 669. The segment at 675–772 (IDTADEFDDE…EESMEGDEHL (98 aa)) is disordered. Acidic residues predominate over residues 676-689 (DTADEFDDEDDDPN). Basic and acidic residues-rich tracts occupy residues 698–708 (MSHDNHCHSQD) and 747–772 (ERDY…DEHL). The segment at 861–884 (KICYVCKKSFKSSYSVKLHYRNVH) adopts a C2H2-type 2 zinc-finger fold. Residues lysine 922 and lysine 947 each participate in a glycyl lysine isopeptide (Lys-Gly) (interchain with G-Cter in SUMO2) cross-link. 2 disordered regions span residues 955 to 976 (LGLD…HLNG) and 996 to 1041 (LQSS…TLPG). The segment covering 1010 to 1023 (AGSDEGILLDDIDG) has biased composition (acidic residues). C2H2-type zinc fingers lie at residues 1063 to 1086 (IMCN…KTVH) and 1091 to 1118 (HKCK…PNLH). The interval 1107–1127 (SRNRHSQNPNLHKNIPFTSID) is disordered.

Highly expressed in ovary, testis and kidney. Expressed at moderate levels in skin and small intestine, and at lower levels in lung. Trace amounts of expression detected in liver and colon. Not detected in brain, spleen or thymus.

It localises to the nucleus. Functionally, probable transcription factor specific for skin keratinocytes. May play a role in the differentiation of spermatozoa and oocytes. May also play an important role in early urinary-tract development. This Mus musculus (Mouse) protein is Zinc finger protein basonuclin-2.